The primary structure comprises 131 residues: uncharacterized protein (131 aa).

An HTH hxlR-type domain is found at 26–124 (CSVEVAVNEI…WGKMYGSHQE (99 aa)).

This is an uncharacterized protein from Methanothermobacter thermautotrophicus (strain ATCC 29096 / DSM 1053 / JCM 10044 / NBRC 100330 / Delta H) (Methanobacterium thermoautotrophicum).